The chain runs to 263 residues: Zinc import ATP-binding protein ZnuC (263 aa).

An ABC transporter domain is found at 11 to 226; that stretch reads VELKNINVVF…PTFIHFFGDQ (216 aa). 43–50 contributes to the ATP binding site; that stretch reads GPNGGGKS.

This sequence belongs to the ABC transporter superfamily. Zinc importer (TC 3.A.1.15.5) family. As to quaternary structure, the complex is composed of two ATP-binding proteins (ZnuC), two transmembrane proteins (ZnuB) and a solute-binding protein (ZnuA).

The protein resides in the cell inner membrane. It catalyses the reaction Zn(2+)(out) + ATP(in) + H2O(in) = Zn(2+)(in) + ADP(in) + phosphate(in) + H(+)(in). In terms of biological role, part of the ABC transporter complex ZnuABC involved in zinc import. Responsible for energy coupling to the transport system. The sequence is that of Zinc import ATP-binding protein ZnuC from Pasteurella multocida (strain Pm70).